The sequence spans 359 residues: Salicylate carboxymethyltransferase (359 aa).

Y18 contributes to the S-adenosyl-L-methionine binding site. Residues Y18, 21–25, and Q25 each bind substrate; that span reads NSFIQ. S-adenosyl-L-methionine is bound by residues G59, 59–60, 59–61, N65, 96–99, D98, 129–131, and 146–148; these read GC, GCS, LNDL, SFY, and SYS. Residues 147–151 and W151 each bind substrate; that span reads YSLMW. Residues N162, D248, F250, and N251 each contribute to the Mg(2+) site. Position 255 (Y255) interacts with substrate.

Belongs to the methyltransferase superfamily. SABATH family.

The enzyme catalyses salicylate + S-adenosyl-L-methionine = methyl salicylate + S-adenosyl-L-homocysteine. Catalyzes the methylation of the free carboxyl end of the plant hormone salicylic acid (SA). Converts SA to SA methyl ester (MSA). The volatile compound MSA is hypothesized to act as an airborne signal that triggers defense responses in uninfected plants. MSA is an important chemoattractant for moth pollinated flowering plants. The polypeptide is Salicylate carboxymethyltransferase (SAMT) (Clarkia breweri (Fairy fans)).